Reading from the N-terminus, the 410-residue chain is Killer cell immunoglobulin-like receptor 3DL3 (410 aa).

A signal peptide spans 1–25 (MSLMVVSMACVGFFLLEGPWPHVGG). Residues 26–322 (QDKPFLSAWP…VSVTGNSRHL (297 aa)) are Extracellular-facing. Ig-like C2-type domains lie at 42–97 (GQHV…RCCS), 137–197 (GETV…RCFG), and 237–295 (GENV…RCFG). 2 disulfide bridges follow: Cys49–Cys95 and Cys144–Cys195. Asn179, Asn239, and Asn273 each carry an N-linked (GlcNAc...) asparagine glycan. Cys244 and Cys293 are joined by a disulfide. A helical transmembrane segment spans residues 323–343 (HVLIGTSVVIIPFAILLFFLL). Residues 344–410 (HRWCANKKNA…PKTPPTDTSV (67 aa)) lie on the Cytoplasmic side of the membrane.

The protein belongs to the immunoglobulin superfamily.

It localises to the cell membrane. Its function is as follows. Receptor on natural killer cells. May inhibit the activity of NK cells thus preventing cell lysis. This chain is Killer cell immunoglobulin-like receptor 3DL3 (KIR3DL3), found in Homo sapiens (Human).